Consider the following 234-residue polypeptide: Glutathione S-transferase sirG (234 aa).

In terms of domain architecture, GST N-terminal spans 15–99 (LYVVKATPTS…YLTDAYDHEG (85 aa)). The 126-residue stretch at 105–230 (DLWERTQVNN…KALSQKFRPS (126 aa)) folds into the GST C-terminal domain.

Belongs to the GST superfamily.

It carries out the reaction RX + glutathione = an S-substituted glutathione + a halide anion + H(+). It functions in the pathway mycotoxin biosynthesis. Its function is as follows. Glutathione S-transferase; part of the gene cluster that mediates the biosynthesis of sirodesmin PL, an epipolythiodioxopiperazine (ETP) characterized by a disulfide bridged cyclic dipeptide and that acts as a phytotoxin which is involved in the blackleg didease of canola. SirD catalyzes the O-prenylation of L-tyrosine (L-Tyr) in the presence of dimethylallyl diphosphate (DMAPP) to yield 4-O-dimethylallyl-L-Tyr, and therefore represents probably the first pathway-specific enzyme in the biosynthesis of sirodesmin PL. 4-O-dimethylallyl-L-Tyr, then undergoes condensation with L-Ser in a reaction catalyzed by the non-ribosomal peptide synthase sirP to form the diketopiperazine (DKP) backbone. Further bishydroxylation of the DKP performed by the cytochrome P450 monooxygenase sirC leads to the production of the intermediate phomamide. This step is essential to form the reactive thiol group required for toxicity of sirodesmin PL. The next steps of sirodesmin biosynthesis are not well understood yet, but some predictions could be made from intermediate compounds identification. Phomamide is converted into phomalizarine via oxidation, probably by sirT. Further oxidation, methylation (by sirM or sirN) and reduction steps convert phomalizarine to deacetyl sirodesmin. Finally, acetyltransferase sirH probably acetylates deacetyl sirodesmin to produce sirodesmin PL. In Leptosphaeria maculans (Blackleg fungus), this protein is Glutathione S-transferase sirG.